Reading from the N-terminus, the 95-residue chain is Aspartyl/glutamyl-tRNA(Asn/Gln) amidotransferase subunit C (95 aa).

The protein belongs to the GatC family. Heterotrimer of A, B and C subunits.

The catalysed reaction is L-glutamyl-tRNA(Gln) + L-glutamine + ATP + H2O = L-glutaminyl-tRNA(Gln) + L-glutamate + ADP + phosphate + H(+). It catalyses the reaction L-aspartyl-tRNA(Asn) + L-glutamine + ATP + H2O = L-asparaginyl-tRNA(Asn) + L-glutamate + ADP + phosphate + 2 H(+). Functionally, allows the formation of correctly charged Asn-tRNA(Asn) or Gln-tRNA(Gln) through the transamidation of misacylated Asp-tRNA(Asn) or Glu-tRNA(Gln) in organisms which lack either or both of asparaginyl-tRNA or glutaminyl-tRNA synthetases. The reaction takes place in the presence of glutamine and ATP through an activated phospho-Asp-tRNA(Asn) or phospho-Glu-tRNA(Gln). The chain is Aspartyl/glutamyl-tRNA(Asn/Gln) amidotransferase subunit C from Allorhizobium ampelinum (strain ATCC BAA-846 / DSM 112012 / S4) (Agrobacterium vitis (strain S4)).